A 147-amino-acid chain; its full sequence is D-aminoacyl-tRNA deacylase (147 aa).

Residues 136–137 (GP) carry the Gly-cisPro motif, important for rejection of L-amino acids motif.

It belongs to the DTD family. In terms of assembly, homodimer.

Its subcellular location is the cytoplasm. It carries out the reaction glycyl-tRNA(Ala) + H2O = tRNA(Ala) + glycine + H(+). The enzyme catalyses a D-aminoacyl-tRNA + H2O = a tRNA + a D-alpha-amino acid + H(+). Functionally, an aminoacyl-tRNA editing enzyme that deacylates mischarged D-aminoacyl-tRNAs. Also deacylates mischarged glycyl-tRNA(Ala), protecting cells against glycine mischarging by AlaRS. Acts via tRNA-based rather than protein-based catalysis; rejects L-amino acids rather than detecting D-amino acids in the active site. By recycling D-aminoacyl-tRNA to D-amino acids and free tRNA molecules, this enzyme counteracts the toxicity associated with the formation of D-aminoacyl-tRNA entities in vivo and helps enforce protein L-homochirality. This chain is D-aminoacyl-tRNA deacylase, found in Streptococcus thermophilus (strain CNRZ 1066).